We begin with the raw amino-acid sequence, 201 residues long: Retinol-binding protein 4 (201 aa).

The signal sequence occupies residues 1 to 18; the sequence is MEWVWALVLLAALGSAQA. Cystine bridges form between cysteine 22–cysteine 178, cysteine 88–cysteine 192, and cysteine 138–cysteine 147. Glutamine 116 contributes to the substrate binding site. Arginine 139 carries the post-translational modification Omega-N-methylarginine.

This sequence belongs to the calycin superfamily. Lipocalin family. As to quaternary structure, interacts with TTR. Interaction with TTR prevents its loss by filtration through the kidney glomeruli. Interacts with STRA6.

The protein resides in the secreted. Retinol-binding protein that mediates retinol transport in blood plasma. Delivers retinol from the liver stores to the peripheral tissues. Transfers the bound all-trans retinol to STRA6, that then facilitates retinol transport across the cell membrane. This Sus scrofa (Pig) protein is Retinol-binding protein 4 (RBP4).